Reading from the N-terminus, the 455-residue chain is Probable glucarate dehydratase (455 aa).

Residues His-42, Thr-113, Tyr-160, and Lys-215 each coordinate substrate. Residue Lys-217 is the Proton acceptor of the active site. Asp-245, Glu-276, and Asn-299 together coordinate Mg(2+). Substrate is bound at residue 245–247; sequence DPN. Substrate is bound by residues Asn-299, 349 to 351, His-378, and Arg-431; that span reads HSN. His-349 acts as the Proton acceptor in catalysis.

Belongs to the mandelate racemase/muconate lactonizing enzyme family. GlucD subfamily. It depends on Mg(2+) as a cofactor.

It catalyses the reaction D-glucarate = 5-dehydro-4-deoxy-D-glucarate + H2O. It participates in carbohydrate acid metabolism; D-glucarate degradation; 2,5-dioxopentanoate from D-glucarate: step 1/2. Its function is as follows. Catalyzes the dehydration of glucarate to 5-keto-4-deoxy-D-glucarate (5-kdGluc). This Bacillus subtilis (strain 168) protein is Probable glucarate dehydratase (gudD).